Here is an 872-residue protein sequence, read N- to C-terminus: Leucine--tRNA ligase (872 aa).

The 'HIGH' region signature appears at 56 to 66 (PYPSGNLHMGH). The 'KMSKS' region motif lies at 629 to 633 (KMSKS). ATP is bound at residue lysine 632.

This sequence belongs to the class-I aminoacyl-tRNA synthetase family.

The protein resides in the cytoplasm. It carries out the reaction tRNA(Leu) + L-leucine + ATP = L-leucyl-tRNA(Leu) + AMP + diphosphate. In Prochlorococcus marinus (strain MIT 9211), this protein is Leucine--tRNA ligase.